The chain runs to 606 residues: MAIRQLSETLINQIAAGEVIERPASAAKELIENALDAGATRIEIATAGGGKALLRVSDNGSGMEATDLELAVRRHCTSKISETLEDIRTLGFRGEALPSIGSVARLNIASRRRDSAGGHEIAVAGGKIVHIRPAAANPGTIVEVRDLFFATPARLKFLKSEKAEAGAITEIVKRMAIAFPAVRFVLSGSDRTTLEFPATGDDHLARMAQVLGKEFRDNAILLDAVREDISLTGFAGVPTFNRGNSAHQYAFVNGRPVQDKLILSAIRGAYAETIPSGRYPVAVLSITLDPALVDVNVHPAKSDVRFRDPGLVRGLIVGAIREALARDGSRAATTGASDMLRAFRPGFQPHAQRPQAPWSAETSPFRPYPPAAGFSERPQASFDRLSMPTARAELQPSPQPGAPEPAASAETTGRYPLGAARAQIHANYIVAQTEDGLVIVDQHAAHERLVFEAMRKALHSKRLASQVLLIPEIIDLPEEDCDRLMQHAAELSELGLAIERFGPGAIAVRETPAMLGEVDAHGLIRQLADEIAEWDTASGLSAKLEYVAATMACHGSVRSGRRLRPEEMNALLREMEVTPGSGQCNHGRPTYIELKLSDIERLFGRS.

Residues 348–378 (QPHAQRPQAPWSAETSPFRPYPPAAGFSERP) form a disordered region.

This sequence belongs to the DNA mismatch repair MutL/HexB family.

Its function is as follows. This protein is involved in the repair of mismatches in DNA. It is required for dam-dependent methyl-directed DNA mismatch repair. May act as a 'molecular matchmaker', a protein that promotes the formation of a stable complex between two or more DNA-binding proteins in an ATP-dependent manner without itself being part of a final effector complex. This chain is DNA mismatch repair protein MutL, found in Rhizobium etli (strain CIAT 652).